Reading from the N-terminus, the 136-residue chain is Galectin-7 (136 aa).

A Galectin domain is found at 6 to 136 (HKTSLPQGVR…DVQLHSLNIF (131 aa)). 70 to 76 (WGREERG) lines the a beta-D-galactoside pocket.

Monomer.

The protein localises to the cytoplasm. It localises to the nucleus. It is found in the secreted. In terms of biological role, could be involved in cell-cell and/or cell-matrix interactions necessary for normal growth control. Pro-apoptotic protein that functions intracellularly upstream of JNK activation and cytochrome c release. This chain is Galectin-7 (Lgals7), found in Mus musculus (Mouse).